Here is a 2413-residue protein sequence, read N- to C-terminus: MSGLPPPPPGFEEDSDLALPPPPPPPPGYEIEELDNPMVPSSVNEDTFLPPPPPPPSNFEINAEEIVDFTLPPPPPPPGLDELETKAEKKVELHGKRKLDIGKDTFVTRKSRKRAKKMTKKAKRSNLYTPKAEMPPEHLRKIINTHSDMASKMYNTDKKAFLGALKYLPHAILKLLENMPHPWEQAKEVKVLYHTSGAITFVNETPRVIEPVYTAQWSATWIAMRREKRDRTHFKRMRFPPFDDDEPPLSYEQHIENIEPLDPINLPLDSQDDEYVKDWLYDSRPLEEDSKKVNGTSYKKWSFDLPEMSNLYRLSTPLRDEVTDKNYYYLFDKKSFFNGKALNNAIPGGPKFEPLYPREEEEDYNEFNSIDRVIFRVPIRSEYKVAFPHLYNSRPRSVRIPWYNNPVSCIIQNDEEYDTPALFFDPSLNPIPHFIDNNSSLNVSNTKENGDFTLPEDFAPLLAEEEELILPNTKDAMSLYHSPFPFNRTKGKMVRAQDVALAKKWFLQHPDEEYPVKVKVSYQKLLKNYVLNELHPTLPTNHNKTKLLKSLKNTKYFQQTTIDWVEAGLQLCRQGHNMLNLLIHRKGLTYLHLDYNFNLKPTKTLTTKERKKSRLGNSFHLMRELLKMMKLIVDTHVQFRLGNVDAFQLADGIHYILNHIGQLTGIYRYKYKVMHQIRACKDLKHIIYYKFNKNLGKGPGCGFWQPAWRVWLNFLRGTIPLLERYIGNLITRQFEGRSNEIVKTTTKQRLDAYYDLELRNSVMDDILEMMPESIRQKKARTILQHLSEAWRCWKANIPWDVPGMPAPIKKIIERYIKSKADAWVSAAHYNRERIKRGAHVEKTMVKKNLGRLTRLWIKNEQERQRQIQKNGPEITPEEATTIFSVMVEWLESRSFSPIPFPPLTYKNDTKILVLALEDLKDVYASKVRLNASEREELALIEEAYDNPHDTLNRIKKYLLTQRVFKPVDITMMENYQNISPVYSVDPLEKITDAYLDQYLWYEADQRKLFPNWIKPSDSEIPPLLVYKWTQGINNLSEIWDVSRGQSAVLLETTLGEMAEKIDFTLLNRLLRLIVDPNIADYITAKNNVVINFKDMSHVNKYGLIRGLKFASFIFQYYGLVIDLLLLGQERATDLAGPANNPNEFMQFKSKEVEKAHPIRLYTRYLDRIYMLFHFEEDEGEELTDEYLAENPDPNFENSIGYNNRKCWPKDSRMRLIRQDVNLGRAVFWEIQSRVPTSLTSIKWENAFVSVYSKNNPNLLFSMCGFEVRILPRQRMEEVVSNDEGVWDLVDERTKQRTAKAYLKVSEEEIKKFDSRIRGILMASGSTTFTKVAAKWNTSLISLFTYFREAIVATEPLLDILVKGETRIQNRVKLGLNSKMPTRFPPAVFYTPKELGGLGMISASHILIPASDLSWSKQTDTGITHFRAGMTHEDEKLIPTIFRYITTWENEFLDSQRVWAEYATKRQEAIQQNRRLAFEELEGSWDRGIPRISTLFQRDRHTLAYDRGHRIRREFKQYSLERNSPFWWTNSHHDGKLWNLNAYRTDVIQALGGIETILEHTLFKGTGFNSWEGLFWEKASGFEDSMQFKKLTHAQRTGLSQIPNRRFTLWWSPTINRANVYVGFLVQLDLTGIFLHGKIPTLKISLIQIFRAHLWQKIHESIVFDICQILDGELDVLQIESVTKETVHPRKSYKMNSSAADITMESVHEWEVSKPSLLHETNDSFKGLITNKMWFDVQLRYGDYDSHDISRYVRAKFLDYTTDNVSMYPSPTGVMIGIDLAYNMYDAYGNWFNGLKPLIQNSMRTIMKANPALYVLRERIRKGLQIYQSSVQEPFLNSSNYAELFNNDIKLFVDDTNVYRVTVHKTFEGNVATKAINGCIFTLNPKTGHLFLKIIHTSVWAGQKRLSQLAKWKTAEEVSALVRSLPKEEQPKQIIVTRKAMLDPLEVHMLDFPNIAIRPTELRLPFSAAMSIDKLSDVVMKATEPQMVLFNIYDDWLDRISSYTAFSRLTLLLRALKTNEESAKMILLSDPTITIKSYHLWPSFTDEQWITIESQMRDLILTEYGRKYNVNISALTQTEIKDIILGQNIKAPSVKRQKMAELEAARSEKQNDEEAAGASTVMKTKTINAQGEEIVVVASADYESQTFSSKNEWRKSAIANTLLYLRLKNIYVSADDFVEEQNVYVLPKNLLKKFIEISDVKIQVAAFIYGMSAKDHPKVKEIKTVVLVPQLGHVGSVQISNIPDIGDLPDTEGLELLGWIHTQTEELKFMAASEVATHSKLFADKKRDCIDISIFSTPGSVSLSAYNLTDEGYQWGEENKDIMNVLSEGFEPTFSTHAQLLLSDRITGNFIIPSGNVWNYTFMGTAFNQEGDYNFKYGIPLEFYNEMHRPVHFLQFSELAGDEELEAEQIDVFS.

Composition is skewed to pro residues over residues 1-10 and 19-28; these read MSGLPPPPPG and LPPPPPPPPG. The disordered stretch occupies residues 1–60; the sequence is MSGLPPPPPGFEEDSDLALPPPPPPPPGYEIEELDNPMVPSSVNEDTFLPPPPPPPSNFE. The segment at 253-543 is SNU114/CWC21 interacting domain (SCwid); it reads QHIENIEPLD…LHPTLPTNHN (291 aa). The segment at 885–1375 is reverse transcriptase homology domain; it reads VMVEWLESRS…RIQNRVKLGL (491 aa). Residues 1376–1649 are linker; sequence NSKMPTRFPP…TLKISLIQIF (274 aa). An important for branch point selection region spans residues 1585–1598; the sequence is MQFKKLTHAQRTGL. The segment at 1653-1824 is restriction endonuclease homology domain; that stretch reads LWQKIHESIV…LRERIRKGLQ (172 aa). Positions 1839 to 2092 are RNase H homology domain; that stretch reads NYAELFNNDI…ILGQNIKAPS (254 aa). Residues 2182–2311 enclose the MPN domain; it reads VYVLPKNLLK…LSAYNLTDEG (130 aa).

As to quaternary structure, component of the U4/U6-U5 tri-snRNP complex composed of the U4, U6 and U5 snRNAs and at least PRP3, PRP4, PRP6, PRP8, PRP18, PRP31, PRP38, SNU13, SNU23, SNU66, SNU114, SPP381, SMB1, SMD1, SMD2, SMD3, SMX2, SMX3, LSM2, LSM3, LSM4, LSM5, LSM6, LSM7, LSM8, BRR2 and DIB1. Belongs to the CWC complex (or CEF1-associated complex), a spliceosome sub-complex reminiscent of a late-stage spliceosome composed of the U2, U5 and U6 snRNAs and at least BUD13, BUD31, BRR2, CDC40, CEF1, CLF1, CUS1, CWC2, CWC15, CWC21, CWC22, CWC23, CWC24, CWC25, CWC27, ECM2, HSH155, IST3, ISY1, LEA1, MSL1, NTC20, PRP8, PRP9, PRP11, PRP19, PRP21, PRP22, PRP45, PRP46, SLU7, SMB1, SMD1, SMD2, SMD3, SMX2, SMX3, SNT309, SNU114, SPP2, SYF1, SYF2, RSE1 and YJU2. Interacts with PRP40 and SNP1. Interacts (via SCwid domain) with CWC21. Interacts (via SCwid domain) with SNU114 (via N-terminus). Interacts (via RNase H homology domain and MPN domain) with BRR2; this modulates BRR2 ATPase and helicase activity. Interacts (via RNase H homology domain) with AAR2. AAR2 and BRR2 compete for PRP8 binding, and during U5 snRNP maturation BRR2 displaces the initially bound AAR2. Is associated with snRNP U5, together with SNU114 and BRR2.

It is found in the nucleus. Functions as a scaffold that mediates the ordered assembly of spliceosomal proteins and snRNAs. Required for association of BRR2 with the spliceosomal U5 snRNP, and the subsequent assembly of the U4/U6-U5 tri-snRNP complex. Functions as a scaffold that positions spliceosomal U2, U5 and U6 snRNAs at splice sites on pre-mRNA substrates, so that splicing can occur. Interacts with both the 5' and the 3' splice site, as well as the branch region. Has a role in branch site-3' splice site selection. Associates with the branch site-3' splice 3'-exon region. Also has a role in cell cycle. The sequence is that of Pre-mRNA-splicing factor 8 (PRP8) from Saccharomyces cerevisiae (strain ATCC 204508 / S288c) (Baker's yeast).